Consider the following 608-residue polypeptide: MELVLCFVIITISGVIRESSALLLRSPTSNDVFGELVASAERAQPLATRLTKRISRLNFNDREDDFWEDHGDASWNNSYTLVNGRTTLGSENRRRPASHSLIERPYYRDGRLSPVLGVQERRGRSVHSYHEEPVSFFDQRAFDEYTFRRRSQLHRQRARAGLRSRIKQNVRRLWTSARGAVRGWGRRVRRKIGDLFVGHLMPQLRRLRFWDQGLPPVVPPLIGNEPGQASVALVAERMEARLREKTLTEKNPTEAQQAVGTYLINSAENTWFISIPGGRYILLKKRGFLGGGGFGLVYHVEHPTTGQPFALKIFVQRVMNNEVGDKISDLIEDEFGVMKYFPPEWTPARMYSELRFMVPLLKLRVLGKPEFQDARNHLRIFSVCALFPKAQGDLEEAAALLADMDRTNAYNMRMSSTIQMVKLLARFHAFGLVHGDVKLQNFLVDKSGLLLLSDFTQILRTNERRYPPVVTVLYMSPEIATCLITRLRNAIPYTAEIDSWMLGISLYRLWCGDFPFGITLDATALQVAGIVIRSSASSLDFASCHDIPEQFREMIVGFLRKTPGVRLSPQQALEQFSLLNWKGPSPASDTASESEPVSTEEAALLQKE.

An N-terminal signal peptide occupies residues 1–21; it reads MELVLCFVIITISGVIRESSA. N-linked (GlcNAc...) asparagine glycosylation is present at Asn-76. In terms of domain architecture, Protein kinase spans 283 to 579; sequence LKKRGFLGGG…QQALEQFSLL (297 aa). ATP contacts are provided by residues 289 to 297 and Lys-312; that span reads LGGGGFGLV. Asp-436 functions as the Proton acceptor in the catalytic mechanism.

This sequence belongs to the protein kinase superfamily. Ser/Thr protein kinase family. Interacts with ROP5; interaction with ROP5 does not affect kinase activity. Interacts with human BCL2; the interaction probably promotes BCL2 phosphorylation and degradation.

It localises to the secreted. The protein resides in the cytoplasmic vesicle. The protein localises to the secretory vesicle. It is found in the rhoptry. Its subcellular location is the parasitophorous vacuole membrane. It catalyses the reaction L-threonyl-[protein] + ATP = O-phospho-L-threonyl-[protein] + ADP + H(+). It carries out the reaction L-seryl-[protein] + ATP = O-phospho-L-seryl-[protein] + ADP + H(+). In terms of biological role, protein kinase. Virulence factor. Promotes migration of Toxoplasma-infected macrophages through collagen matrix, facilitating parasite transport through tissues and systemic dissemination. Plays a role in the translocation of dense granule effectors, such as GRA16 and GRA24, across the parasitophorous vacuole membrane in Toxoplasma-infected host cells. Phosphorylates mouse IRGB6 (TGTP1/TGTP2), an immunity-related GTPase (IRG) that protects mice from infection by certain intracellular pathogens; the phosphorylation leads to the disassembly of IRGB6 polymers into monomers and dimers. May modulate gene expression in human cells. Promotes autophagy in human cells via modulation of the BCL2-BECN1 pathway. This Toxoplasma gondii protein is Serine/threonine-protein kinase ROP17.